A 567-amino-acid chain; its full sequence is 2-succinyl-5-enolpyruvyl-6-hydroxy-3-cyclohexene-1-carboxylate synthase (567 aa).

Belongs to the TPP enzyme family. MenD subfamily. Homodimer. The cofactor is Mg(2+). It depends on Mn(2+) as a cofactor. Requires thiamine diphosphate as cofactor.

It catalyses the reaction isochorismate + 2-oxoglutarate + H(+) = 5-enolpyruvoyl-6-hydroxy-2-succinyl-cyclohex-3-ene-1-carboxylate + CO2. It functions in the pathway quinol/quinone metabolism; 1,4-dihydroxy-2-naphthoate biosynthesis; 1,4-dihydroxy-2-naphthoate from chorismate: step 2/7. The protein operates within quinol/quinone metabolism; menaquinone biosynthesis. Its function is as follows. Catalyzes the thiamine diphosphate-dependent decarboxylation of 2-oxoglutarate and the subsequent addition of the resulting succinic semialdehyde-thiamine pyrophosphate anion to isochorismate to yield 2-succinyl-5-enolpyruvyl-6-hydroxy-3-cyclohexene-1-carboxylate (SEPHCHC). In Yersinia pseudotuberculosis serotype O:1b (strain IP 31758), this protein is 2-succinyl-5-enolpyruvyl-6-hydroxy-3-cyclohexene-1-carboxylate synthase.